Here is an 83-residue protein sequence, read N- to C-terminus: Acyl carrier protein (83 aa).

Residues 2–77 enclose the Carrier domain; it reads STIEEKVKTI…AAIDFISNSH (76 aa). Serine 37 carries the post-translational modification O-(pantetheine 4'-phosphoryl)serine.

The protein belongs to the acyl carrier protein (ACP) family. In terms of processing, 4'-phosphopantetheine is transferred from CoA to a specific serine of apo-ACP by AcpS. This modification is essential for activity because fatty acids are bound in thioester linkage to the sulfhydryl of the prosthetic group.

The protein resides in the cytoplasm. It functions in the pathway lipid metabolism; fatty acid biosynthesis. Functionally, carrier of the growing fatty acid chain in fatty acid biosynthesis. This chain is Acyl carrier protein, found in Blochmanniella pennsylvanica (strain BPEN).